We begin with the raw amino-acid sequence, 218 residues long: Chymotrypsin-2 (218 aa).

The 218-residue stretch at 1 to 218 (IVGGTDAPRG…FLDWIQKNQL (218 aa)) folds into the Peptidase S1 domain. C25 and C40 are disulfide-bonded. Active-site charge relay system residues include H39 and D84. Disulfide bonds link C148/C161 and C171/C195. Residue S175 is the Charge relay system of the active site.

Belongs to the peptidase S1 family.

It localises to the secreted. The protein resides in the extracellular space. It carries out the reaction Preferential cleavage: Tyr-|-Xaa, Trp-|-Xaa, Phe-|-Xaa, Leu-|-Xaa.. This is Chymotrypsin-2 from Vespa crabro (European hornet).